Consider the following 60-residue polypeptide: Large ribosomal subunit protein bL33 (60 aa).

The protein belongs to the bacterial ribosomal protein bL33 family.

In Chlorobium limicola (strain DSM 245 / NBRC 103803 / 6330), this protein is Large ribosomal subunit protein bL33.